A 667-amino-acid chain; its full sequence is E3 ubiquitin-protein ligase RNF6 (667 aa).

Disordered stretches follow at residues Met-1 to Gln-25, Lys-75 to Ser-100, Gly-116 to Phe-216, Phe-295 to Ser-355, Glu-396 to Glu-419, Gly-507 to Met-532, and Glu-537 to Arg-556. Residues Ala-79–Asp-90 are compositionally biased toward low complexity. The span at Gly-116–Ser-139 shows a compositional bias: polar residues. Residues Ile-150 to Asp-163 are compositionally biased toward basic and acidic residues. Positions Ser-191–Pro-200 are enriched in low complexity. A compositionally biased stretch (polar residues) spans Ser-296–Asn-327. Positions His-516–Ala-530 are enriched in low complexity. Ser-559 is modified (phosphoserine). The RING-type; atypical zinc finger occupies Cys-614–Arg-655.

Belongs to the RNF12 family. In terms of tissue distribution, widely expressed with higher expression in the testis in both germ cells and Sertoli cells.

The protein resides in the nucleus. The protein localises to the cytoplasm. It localises to the cell projection. It is found in the axon. Its subcellular location is the PML body. The enzyme catalyses S-ubiquitinyl-[E2 ubiquitin-conjugating enzyme]-L-cysteine + [acceptor protein]-L-lysine = [E2 ubiquitin-conjugating enzyme]-L-cysteine + N(6)-ubiquitinyl-[acceptor protein]-L-lysine.. Its pathway is protein modification; protein ubiquitination. Its function is as follows. E3 ubiquitin-protein ligase mediating 'Lys-48'-linked polyubiquitination of LIMK1 and its subsequent targeting to the proteasome for degradation. Negatively regulates axonal outgrowth through regulation of the LIMK1 turnover. Mediates 'Lys-6' and 'Lys-27'-linked polyubiquitination of AR/androgen receptor thereby modulating its transcriptional activity. May also bind DNA and function as a transcriptional regulator. Mediates polyubiquitination of QKI in macrophages, leading to its degradation. This chain is E3 ubiquitin-protein ligase RNF6, found in Mus musculus (Mouse).